The sequence spans 259 residues: Tryptophan synthase alpha chain (259 aa).

Catalysis depends on proton acceptor residues Glu-42 and Asp-53.

The protein belongs to the TrpA family. Tetramer of two alpha and two beta chains.

The enzyme catalyses (1S,2R)-1-C-(indol-3-yl)glycerol 3-phosphate + L-serine = D-glyceraldehyde 3-phosphate + L-tryptophan + H2O. Its pathway is amino-acid biosynthesis; L-tryptophan biosynthesis; L-tryptophan from chorismate: step 5/5. Its function is as follows. The alpha subunit is responsible for the aldol cleavage of indoleglycerol phosphate to indole and glyceraldehyde 3-phosphate. The polypeptide is Tryptophan synthase alpha chain (Erythrobacter litoralis (strain HTCC2594)).